The following is a 407-amino-acid chain: Heparan-sulfate 6-O-sulfotransferase 1-B (407 aa).

The Cytoplasmic portion of the chain corresponds to 8-14; the sequence is MVERTSK. The chain crosses the membrane as a helical; Signal-anchor for type II membrane protein span at residues 15–35; sequence FLLIVVGSVFFMLILYQYVAP. The Lumenal segment spans residues 36–407; the sequence is GVINFGSPHG…DYMNHIINGW (372 aa). Residue 92 to 100 participates in 3'-phosphoadenylyl sulfate binding; sequence HIQKTGGTT. Substrate contacts are provided by residues 122-123, R139, W144, and H149; that span reads KK. Catalysis depends on H149, which acts as the Proton acceptor. The 3'-phosphoadenylyl sulfate site is built by R183 and S191. Residues H195 and W202 each contribute to the substrate site. Residue N262 is glycosylated (N-linked (GlcNAc...) asparagine). 315 to 317 serves as a coordination point for 3'-phosphoadenylyl sulfate; the sequence is MQY. N-linked (GlcNAc...) asparagine glycosylation occurs at N318. A 3'-phosphoadenylyl sulfate-binding site is contributed by 321–322; that stretch reads RA. The N-linked (GlcNAc...) asparagine glycan is linked to N329.

The protein belongs to the sulfotransferase 6 family. In terms of tissue distribution, during early somitogenesis, first expressed in floor plate and somites. During mid-somitogenesis, expressed strongly in somites and more weakly in eye and hindbrain. During late somitogenesis, expressed in eye, hindbrain and posterior somites. At 24 hours post-fertilization (hpf), expressed in lens, forebrain, hindbrain, otic vesicle, anterior spinal cord neurons and posterior somites. At 36 hpf, expressed in the retinal ciliary marginal zone, brain, pancreas and weakly in pectoral fin. At 48 hpf, expressed in the retinal ciliary marginal zone, retinal ganglion cells, rhombomeres, otic vesicle and weakly in pectoral fin.

The protein resides in the membrane. It catalyses the reaction alpha-D-glucosaminyl-[heparan sulfate](n) + 3'-phosphoadenylyl sulfate = 6-sulfo-alpha-D-glucosaminyl-[heparan sulfate](n) + adenosine 3',5'-bisphosphate + H(+). Functionally, 6-O-sulfation enzyme which catalyzes the transfer of sulfate from 3'-phosphoadenosine 5'-phosphosulfate (PAPS) to position 6 of the N-sulfoglucosamine residue (GlcNS) of heparan sulfate. The sequence is that of Heparan-sulfate 6-O-sulfotransferase 1-B from Danio rerio (Zebrafish).